The primary structure comprises 403 residues: MLALILTISICIFLKGSTCSYINLGSEGIVFGAPNCPVDIPLTCTNSTPIDNSCCFESPGGILLSTQFWDYYPPIGGNESFTLHGLWPDNCDGTYEQFCDDSLNIRSATDIVLNQFGDKVLYGKMSEFWKNFNGNDESLWIHEFNKHATCVKTIRPTCYDNQRYVKNKNVYDFYNITMNLYEKLPTFQFLAAEGIVPSLTQKYSKKQINDALTKYFGKAVYFKCNKYKALQEVWYYHYLQGSLKEENFSPIDTIINSNCPEENIQFIPKNGFNPGPQPPKSPRKGYLESPGKKGCLISNGLWYEAGTCATYAISQQEFGGYKIRSSKGYCGMNSQGQFTCNKQVDPTKNQFQYNKDTRKIGYGGNFAWCLDTEHKHGDGKTAQTPIKISDGQCDSFPVQYGGK.

A signal peptide spans Met1–Cys19. 4 cysteine pairs are disulfide-bonded: Cys36–Cys55, Cys44–Cys91, Cys54–Cys158, and Cys99–Cys150. Asn78 carries an N-linked (GlcNAc...) asparagine glycan. Active-site residues include His84, Glu143, and His147. Residue Asn175 is glycosylated (N-linked (GlcNAc...) asparagine). Cys224 and Cys259 are joined by a disulfide. Positions Pro268–Glu288 are disordered.

The protein belongs to the RNase T2 family.

The protein resides in the vacuole lumen. It localises to the cytoplasm. It catalyses the reaction a ribonucleotidyl-ribonucleotide-RNA + H2O = a 3'-end 3'-phospho-ribonucleotide-RNA + a 5'-end dephospho-ribonucleoside-RNA + H(+). In terms of biological role, rnase which modulates cell survival under stress conditions. Released from the vacuole to the cytoplasm during stress to promote tRNA and rRNA cleavage and to activate separately a downstream pathway that promotes cell death. Involved in cell size, vacuolar morphology and growth at high temperatures and high salt concentration. The sequence is that of Ribonuclease T2-like (RNY1) from Debaryomyces hansenii (strain ATCC 36239 / CBS 767 / BCRC 21394 / JCM 1990 / NBRC 0083 / IGC 2968) (Yeast).